The following is an 872-amino-acid chain: MGLKRPWLLGAVVLLTLIQVQGGLAEWTQCRMGFSKEKYSFLVPKNLETDKALGRVIFNSCEGPVRIQFASKDPNFEIHKDGTVYIKNPAKMKDNRKTFRVLAWETKGHVYSTNITLKREGHRHRQDLFSGKHSHHPKSETGLKRQKRDWVIPPIIVSENEKGPFPKRIVQIKSSYAKEVKVYYSITGQGADTPPEGVFAIGREDGWLNVTRPLDREAIDNYVLFSHAVSSNGANVEDPMEIIIKVQDQNDNDPVFTQSVFEGSVPEGSKPGTAVMTVSATDADDSVDMYNGVITYSILNQEPKEPTNKMFTIHSESGLISVLTTGLDREKNPVYTLTIQAADGEFGKDRTTTATALIVVMDTNDNPPVFDPTQYTAKVPENEVGYEVARLTVTDEDIEGTDAWNAVYKIIKGNEANYFSIQTDTGNIGLLKTVKGLDYELKKQYILSVIVTNKANFSVPLQTSTATVTVSVEDVNEAPIFLPPVKEVSVSEDLPSGQVVATYTAQDPDKEQNQKITYVIGNDPAGWVSVNKDNGIVTGNGNLDRESKFVLNNTYKVIILAADSGSPSATGTGTLVLNLLDVNDNGPFLEPQQESFCQKDPGFRVFTIIDRDLSPNTYPYKAELTGESNENWTAIVTGQSILELRPKKELEIGQYDVMITLLDSFGLSNVTKLHITICQCDGDKMQCEEKAAIAGGLGISAIVGILGGILALLLLLLLLLLFVRRKKVVKEPLLPPEDETRDNVFSYDEEGGGEEDQDFDLSQLHRGLDARPDVIRNDVAPVLAAPQYRPRPANPDEIGNFIDENLNAADNDPTAPPYDSLLVFDYEGSGSEAASLSSLNSPNSDLDQDYSALNDWGPRFTKLADMYGGDED.

An N-terminal signal peptide occupies residues 1–25 (MGLKRPWLLGAVVLLTLIQVQGGLA). A propeptide spanning residues 26–148 (EWTQCRMGFS…SETGLKRQKR (123 aa)) is cleaved from the precursor. 5 consecutive Cadherin domains span residues 148–256 (RDWV…DPVF), 257–370 (TQSV…PPVF), 371–481 (DPTQ…APIF), 482–589 (LPPV…GPFL), and 605–688 (VFTI…MQCE). Residues 149-701 (DWVIPPIIVS…AIAGGLGISA (553 aa)) lie on the Extracellular side of the membrane. Asn209 carries N-linked (GlcNAc...) asparagine glycosylation. Residues Asp251 and Asp282 each contribute to the Ca(2+) site. Asn456, Asn552, Asn631, and Asn669 each carry an N-linked (GlcNAc...) asparagine glycan. A helical membrane pass occupies residues 702–722 (IVGILGGILALLLLLLLLLLF). At 723–872 (VRRKKVVKEP…LADMYGGDED (150 aa)) the chain is on the cytoplasmic side. Residues 739-758 (ETRDNVFSYDEEGGGEEDQD) form a disordered region. Over residues 747–758 (YDEEGGGEEDQD) the composition is skewed to acidic residues.

In terms of assembly, homodimer. In terms of tissue distribution, abundantly expressed in intestine, stomach, liver, kidney, skin and eye. Also expressed in heart, lung, testis, ovary, muscle and brain.

The protein localises to the cell junction. The protein resides in the adherens junction. Its subcellular location is the cell membrane. It is found in the endosome. It localises to the golgi apparatus. The protein localises to the trans-Golgi network. The protein resides in the cytoplasm. Its subcellular location is the desmosome. Its function is as follows. Cadherins are calcium-dependent cell adhesion proteins. They preferentially interact with themselves in a homophilic manner in connecting cells; cadherins may thus contribute to the sorting of heterogeneous cell types. Promotes organization of radial actin fiber structure and cellular response to contractile forces, via anchoring of radial actin fibers to CDH1 junction complexes at the cell membrane. E-cadherin is a ligand for integrin alpha-E/beta-7. In Xenopus laevis (African clawed frog), this protein is Cadherin-1 (cdh1).